The primary structure comprises 227 residues: MICOS complex subunit Mic19 (227 aa).

The N-myristoyl glycine moiety is linked to residue G2. S29 is subject to Phosphoserine. Residues 32–57 (VIDRMKESSPSGSKSQRYSSVYGASV) are disordered. Residues 39-50 (SSPSGSKSQRYS) are compositionally biased toward polar residues. Y49 carries the post-translational modification Phosphotyrosine. A phosphoserine mark is found at S50, S51, S56, and S58. Positions 73–92 (EQAKKESEHQRRLKQARDLE) are disordered. K142 is subject to N6-acetyllysine. One can recognise a CHCH domain in the interval 180–222 (HPVCADLQTKILQCYRQNTQQTLSCSALASQYMHCVNHAKQSM). Short sequence motifs (cx9C motif) lie at residues 183–193 (CADLQTKILQC) and 204–214 (CSALASQYMHC). Cystine bridges form between C183/C214 and C193/C204.

Belongs to the MICOS complex subunit Mic19 family. Metazoan Mic19 subfamily. As to quaternary structure, component of the mitochondrial contact site and cristae organizing system (MICOS) complex, composed of at least MICOS10/MIC10, CHCHD3/MIC19, CHCHD6/MIC25, APOOL/MIC27, IMMT/MIC60, APOO/MIC23/MIC26 and MICOS13/MIC13. This complex was also known under the names MINOS or MitOS complex. The MICOS complex associates with mitochondrial outer membrane proteins SAMM50, MTX1 and MTX2 (together described as components of the mitochondrial outer membrane sorting assembly machinery (SAM) complex) and DNAJC11, mitochondrial inner membrane protein TMEM11 and with HSPA9. The MICOS and SAM complexes together with DNAJC11 are part of a large protein complex spanning both membranes termed the mitochondrial intermembrane space bridging (MIB) complex. Interacts with HSPA1A/HSPA1B and OPA1, preferentially with the soluble OPA1 form.

It localises to the mitochondrion inner membrane. The protein localises to the cytoplasm. It is found in the nucleus. Its subcellular location is the mitochondrion. Component of the MICOS complex, a large protein complex of the mitochondrial inner membrane that plays crucial roles in the maintenance of crista junctions, inner membrane architecture, and formation of contact sites to the outer membrane. Has also been shown to function as a transcription factor which binds to the BAG1 promoter and represses BAG1 transcription. Plays an important role in the maintenance of the MICOS complex stability and the mitochondrial cristae morphology. The polypeptide is MICOS complex subunit Mic19 (Chchd3) (Mus musculus (Mouse)).